A 1130-amino-acid polypeptide reads, in one-letter code: Putative protein tag-278 (1130 aa).

3 disordered regions span residues 1–92, 104–129, and 974–1130; these read MSRS…DIDN, VARE…ELKR, and NELI…AWKF. 2 coiled-coil regions span residues 121-779 and 805-1061; these read AGRE…EEIK and EERE…ARAK. Positions 983–993 are enriched in basic and acidic residues; it reads RQTDESTSEPH. The segment covering 999-1011 has biased composition (polar residues); it reads SITSHGVFQNFVS. 2 stretches are compositionally biased toward basic and acidic residues: residues 1013–1057 and 1068–1081; these read MKDK…EKSP and RLRD…KSDN. Over residues 1082-1095 the composition is skewed to low complexity; the sequence is LESTPSSSSRNLLS. Positions 1116–1130 are enriched in basic and acidic residues; it reads TKKDSSSEKRPAWKF.

The protein is Putative protein tag-278 (tag-278) of Caenorhabditis elegans.